Consider the following 147-residue polypeptide: Hemoglobin subunit beta (147 aa).

At Val-2 the chain carries N-acetylvaline. The 145-residue stretch at 3–147 (HLSAEEKEAV…VANALAHKYH (145 aa)) folds into the Globin domain. Ser-45 bears the Phosphoserine mark. An N6-acetyllysine modification is found at Lys-60. Residue His-64 coordinates heme b. Lys-83 bears the N6-acetyllysine mark. Heme b is bound at residue His-93. S-nitrosocysteine is present on Cys-94. At Lys-145 the chain carries N6-acetyllysine.

The protein belongs to the globin family. As to quaternary structure, heterotetramer of two alpha chains and two beta chains. In terms of tissue distribution, red blood cells.

Involved in oxygen transport from the lung to the various peripheral tissues. The polypeptide is Hemoglobin subunit beta (HBB) (Sus scrofa (Pig)).